We begin with the raw amino-acid sequence, 80 residues long: Raniseptin-7 (80 aa).

Positions 1-22 are cleaved as a signal peptide; the sequence is MAFLKKSLFLVLFLGIVSLSIC. Residues 23–49 constitute a propeptide that is removed on maturation; it reads EEEKREGEEEEKQEEENEELSEEELRE. The disordered stretch occupies residues 27–46; sequence REGEEEEKQEEENEELSEEE. Residues 30–44 show a composition bias toward acidic residues; sequence EEEEKQEEENEELSE.

This sequence belongs to the frog skin active peptide (FSAP) family. Dermaseptin subfamily. As to expression, expressed by the skin glands.

Its subcellular location is the secreted. Has antibacterial activity. This Boana raniceps (Chaco tree frog) protein is Raniseptin-7.